Consider the following 1125-residue polypeptide: Angiopoietin-1 receptor (1125 aa).

The signal sequence occupies residues 1–22; the sequence is MDSLAGLVLCGVSLLLSATVDG. Residues 23–748 lie on the Extracellular side of the membrane; that stretch reads AMDLILINSL…PADLGGRKML (726 aa). Cys-44 and Cys-102 are joined by a disulfide. Residues 44–123 form the Ig-like C2-type 1 domain; it reads CIASGWRPHE…RTMKMRQQAS (80 aa). Residue Asn-158 is glycosylated (N-linked (GlcNAc...) asparagine). 3 EGF-like domains span residues 210 to 252, 254 to 299, and 301 to 341; these read RCEA…RTCE, ACEP…LQCN, and ACQP…LQCE. Intrachain disulfides connect Cys-211–Cys-220, Cys-224–Cys-233, Cys-227–Cys-240, Cys-242–Cys-251, Cys-255–Cys-264, Cys-268–Cys-274, Cys-280–Cys-287, Cys-289–Cys-298, Cys-302–Cys-311, Cys-315–Cys-323, Cys-317–Cys-329, Cys-331–Cys-340, and Cys-370–Cys-424. In terms of domain architecture, Ig-like C2-type 2 spans 350–440; that stretch reads PKIEDLPDHI…GMVEKPFNIS (91 aa). 3 consecutive Fibronectin type-III domains span residues 447 to 541, 545 to 637, and 642 to 735; these read PLNA…TASI, PPRG…TLSD, and QPEN…TLSE. Residues 749–769 form a helical membrane-spanning segment; sequence LIAILGSAGMTCLTVLLAFLI. Residues 770-1125 lie on the Cytoplasmic side of the membrane; sequence MLQLKRANVQ…GIDCSAEEAA (356 aa). Residues 825-1097 form the Protein kinase domain; the sequence is IKFQDVIGEG…QILVSLNRML (273 aa). ATP-binding positions include 831 to 839 and Lys-856; that span reads IGEGNFGQV. A Phosphotyrosine; by autocatalysis modification is found at Tyr-861. Residue Asp-965 is the Proton acceptor of the active site. Tyr-993, Tyr-1103, and Tyr-1109 each carry phosphotyrosine; by autocatalysis.

The protein belongs to the protein kinase superfamily. Tyr protein kinase family. Tie subfamily. Homodimer. Heterodimer with TIE1. Interacts with ANGPT1, ANGPT2 and ANGPT4. At cell-cell contacts in quiescent cells, forms a signaling complex composed of ANGPT1 plus TEK molecules from two adjoining cells. In the absence of endothelial cell-cell contacts, interaction with ANGPT1 mediates contacts with the extracellular matrix. Interacts (tyrosine phosphorylated) with TNIP2. Interacts (tyrosine phosphorylated) with SHC1 (via SH2 domain). Interacts with PTPRB; this promotes endothelial cell-cell adhesion. Interacts with DOK2, GRB2, GRB7, GRB14, PIK3R1 and PTPN11/SHP2. Colocalizes with DOK2 at contacts with the extracellular matrix in migrating cells. Proteolytic processing leads to the shedding of the extracellular domain (soluble TIE-2 alias sTIE-2). Post-translationally, autophosphorylated on tyrosine residues in response to ligand binding. Autophosphorylation occurs in trans, i.e. one subunit of the dimeric receptor phosphorylates tyrosine residues on the other subunit. Autophosphorylation occurs in a sequential manner, where Tyr-993 in the kinase activation loop is phosphorylated first, followed by autophosphorylation at Tyr-1109 and at additional tyrosine residues. ANGPT1-induced phosphorylation is impaired during hypoxia, due to increased expression of ANGPT2. Phosphorylation is important for interaction with GRB14, PIK3R1 and PTPN11. Phosphorylation at Tyr-1103 is important for interaction with GRB2 and GRB7. Phosphorylation at Tyr-1109 is important for interaction with DOK2 and for coupling to downstream signal transduction pathways in endothelial cells. Dephosphorylated by PTPRB. In terms of processing, ubiquitinated. The phosphorylated receptor is ubiquitinated and internalized, leading to its degradation. As to expression, specifically expressed in developing vascular endothelial cells.

Its subcellular location is the cell membrane. The protein resides in the cell junction. It localises to the focal adhesion. The protein localises to the cytoplasm. It is found in the cytoskeleton. Its subcellular location is the secreted. It carries out the reaction L-tyrosyl-[protein] + ATP = O-phospho-L-tyrosyl-[protein] + ADP + H(+). With respect to regulation, angiopoietin binding leads to receptor dimerization and activation by autophosphorylation at Tyr-993 on the kinase activation loop. Its function is as follows. Tyrosine-protein kinase that acts as a cell-surface receptor for ANGPT1, ANGPT2 and ANGPT4 and regulates angiogenesis, endothelial cell survival, proliferation, migration, adhesion and cell spreading, reorganization of the actin cytoskeleton, but also maintenance of vascular quiescence. Has anti-inflammatory effects by preventing the leakage of pro-inflammatory plasma proteins and leukocytes from blood vessels. Required for normal angiogenesis and heart development during embryogenesis. Required for post-natal hematopoiesis. After birth, activates or inhibits angiogenesis, depending on the context. Inhibits angiogenesis and promotes vascular stability in quiescent vessels, where endothelial cells have tight contacts. In quiescent vessels, ANGPT1 oligomers recruit TEK to cell-cell contacts, forming complexes with TEK molecules from adjoining cells, and this leads to preferential activation of phosphatidylinositol 3-kinase and the AKT1 signaling cascades. In migrating endothelial cells that lack cell-cell adhesions, ANGT1 recruits TEK to contacts with the extracellular matrix, leading to the formation of focal adhesion complexes, activation of PTK2/FAK and of the downstream kinases MAPK1/ERK2 and MAPK3/ERK1, and ultimately to the stimulation of sprouting angiogenesis. ANGPT1 signaling triggers receptor dimerization and autophosphorylation at specific tyrosine residues that then serve as binding sites for scaffold proteins and effectors. Signaling is modulated by ANGPT2 that has lower affinity for TEK, can promote TEK autophosphorylation in the absence of ANGPT1, but inhibits ANGPT1-mediated signaling by competing for the same binding site. Signaling is also modulated by formation of heterodimers with TIE1, and by proteolytic processing that gives rise to a soluble TEK extracellular domain. The soluble extracellular domain modulates signaling by functioning as decoy receptor for angiopoietins. TEK phosphorylates DOK2, GRB7, GRB14, PIK3R1, SHC1 and TIE1. In Bos taurus (Bovine), this protein is Angiopoietin-1 receptor (TEK).